Here is a 98-residue protein sequence, read N- to C-terminus: Large ribosomal subunit protein uL23 (98 aa).

This sequence belongs to the universal ribosomal protein uL23 family. Part of the 50S ribosomal subunit. Contacts protein L29, and trigger factor when it is bound to the ribosome.

In terms of biological role, one of the early assembly proteins it binds 23S rRNA. One of the proteins that surrounds the polypeptide exit tunnel on the outside of the ribosome. Forms the main docking site for trigger factor binding to the ribosome. The protein is Large ribosomal subunit protein uL23 of Streptococcus gordonii (strain Challis / ATCC 35105 / BCRC 15272 / CH1 / DL1 / V288).